The sequence spans 399 residues: Centrosomal protein 43 (399 aa).

In terms of domain architecture, LisH spans 70–102; the sequence is DGRLVASLVAEFLQFFNLDFTLAVFQPETSTLQ. 2 disordered regions span residues 139–218 and 232–308; these read EKGP…SSLH and NRTL…SESK. T143 bears the Phosphothreonine mark. A phosphoserine mark is found at S152, S156, and S160. The segment covering 163–172 has biased composition (polar residues); sequence GKTSAQTTPS. Phosphothreonine is present on T170. Residues 175–186 are compositionally biased toward basic residues; sequence PRYKGQGKKKTS. S202 carries the phosphoserine modification. Low complexity predominate over residues 205–218; that stretch reads SVSLSEPKSKSSLH. T234 bears the Phosphothreonine mark. Residues 245-256 show a composition bias toward acidic residues; sequence PDEDDMEGDSFF. The segment covering 259 to 275 has biased composition (basic and acidic residues); that stretch reads PIPKPEKTYGLRKEPRK. Residues 286 to 302 show a composition bias toward low complexity; that stretch reads APPLKSGLSSLAGAPSL. Residues S301 and S326 each carry the phosphoserine modification. The interval 331–353 is disordered; sequence TGEDDDYVDDFNSTSHRSEKSEI. Y337 carries the phosphotyrosine modification.

Belongs to the CEP43 family. Homodimer. Part of a ternary complex that contains CEP350, CEP43 and MAPRE1. Interacts directly with CEP350 and MAPRE1. Interacts with CEP19. Interacts (via N-terminus) with CEP350 (via C-terminus). Ubiquitous. Highly expressed in heart, liver, muscle, kidney, intestine, colon, adrenal gland, prostate, testis, and pancreas.

It is found in the cytoplasm. Its subcellular location is the cytoskeleton. The protein localises to the microtubule organizing center. The protein resides in the centrosome. It localises to the centriole. It is found in the cilium basal body. Required for anchoring microtubules to the centrosomes. Required for ciliation. The polypeptide is Centrosomal protein 43 (Homo sapiens (Human)).